The sequence spans 240 residues: UDP-2,3-diacylglucosamine hydrolase (240 aa).

Mn(2+)-binding residues include Asp8, His10, Asp41, Asn79, and His114. 79 to 80 (NR) serves as a coordination point for substrate. Residues Asp122, Ser160, Asn164, Lys167, and His195 each contribute to the substrate site. Mn(2+)-binding residues include His195 and His197.

This sequence belongs to the LpxH family. Requires Mn(2+) as cofactor.

Its subcellular location is the cell inner membrane. The catalysed reaction is UDP-2-N,3-O-bis[(3R)-3-hydroxytetradecanoyl]-alpha-D-glucosamine + H2O = 2-N,3-O-bis[(3R)-3-hydroxytetradecanoyl]-alpha-D-glucosaminyl 1-phosphate + UMP + 2 H(+). Its pathway is glycolipid biosynthesis; lipid IV(A) biosynthesis; lipid IV(A) from (3R)-3-hydroxytetradecanoyl-[acyl-carrier-protein] and UDP-N-acetyl-alpha-D-glucosamine: step 4/6. Hydrolyzes the pyrophosphate bond of UDP-2,3-diacylglucosamine to yield 2,3-diacylglucosamine 1-phosphate (lipid X) and UMP by catalyzing the attack of water at the alpha-P atom. Involved in the biosynthesis of lipid A, a phosphorylated glycolipid that anchors the lipopolysaccharide to the outer membrane of the cell. This chain is UDP-2,3-diacylglucosamine hydrolase, found in Pectobacterium carotovorum subsp. carotovorum (strain PC1).